The primary structure comprises 550 residues: Arginine--tRNA ligase (550 aa).

Positions 130 to 140 (ANPTGPIHIGG) match the 'HIGH' region motif.

Belongs to the class-I aminoacyl-tRNA synthetase family. As to quaternary structure, monomer.

The protein localises to the cytoplasm. The enzyme catalyses tRNA(Arg) + L-arginine + ATP = L-arginyl-tRNA(Arg) + AMP + diphosphate. This Mycobacterium tuberculosis (strain CDC 1551 / Oshkosh) protein is Arginine--tRNA ligase (argS).